The chain runs to 278 residues: 4-deoxy-L-threo-5-hexosulose-uronate ketol-isomerase (278 aa).

Zn(2+)-binding residues include histidine 196, histidine 198, glutamate 203, and histidine 245.

Belongs to the KduI family. Requires Zn(2+) as cofactor.

The enzyme catalyses 5-dehydro-4-deoxy-D-glucuronate = 3-deoxy-D-glycero-2,5-hexodiulosonate. Its pathway is glycan metabolism; pectin degradation; 2-dehydro-3-deoxy-D-gluconate from pectin: step 4/5. Its function is as follows. Catalyzes the isomerization of 5-dehydro-4-deoxy-D-glucuronate to 3-deoxy-D-glycero-2,5-hexodiulosonate. The chain is 4-deoxy-L-threo-5-hexosulose-uronate ketol-isomerase from Salmonella choleraesuis (strain SC-B67).